Consider the following 257-residue polypeptide: UPF0246 protein CPS_4102 (257 aa).

The protein belongs to the UPF0246 family.

The sequence is that of UPF0246 protein CPS_4102 from Colwellia psychrerythraea (strain 34H / ATCC BAA-681) (Vibrio psychroerythus).